Here is a 125-residue protein sequence, read N- to C-terminus: Protein ApaG (125 aa).

Residues 1 to 125 (MFTSSKVAIQ…FRLAIPTLIN (125 aa)) enclose the ApaG domain.

This Proteus mirabilis (strain HI4320) protein is Protein ApaG.